We begin with the raw amino-acid sequence, 699 residues long: D-(-)-3-hydroxybutyrate oligomer hydrolase (699 aa).

Positions 1–33 (MTAIRGGSRRAPGLALALLGGVLLGACHGDENA) are cleaved as a signal peptide. The active-site Charge relay system is the Ser-311.

It belongs to the D-(-)-3-hydroxybutyrate oligomer hydrolase family.

It localises to the secreted. It carries out the reaction (3R)-hydroxybutanoate dimer + H2O = 2 (R)-3-hydroxybutanoate + H(+). Its pathway is lipid metabolism; butanoate metabolism. Its function is as follows. Participates in the degradation of poly-3-hydroxybutyrate (PHB). It works downstream of poly(3-hydroxybutyrate) depolymerase, hydrolyzing D(-)-3-hydroxybutyrate oligomers of various length (3HB-oligomers) into 3HB-monomers. The chain is D-(-)-3-hydroxybutyrate oligomer hydrolase from Burkholderia mallei (strain SAVP1).